The following is a 293-amino-acid chain: tRNA pseudouridine synthase B (293 aa).

D38 (nucleophile) is an active-site residue.

It belongs to the pseudouridine synthase TruB family. Type 1 subfamily.

It catalyses the reaction uridine(55) in tRNA = pseudouridine(55) in tRNA. Responsible for synthesis of pseudouridine from uracil-55 in the psi GC loop of transfer RNAs. This Nostoc sp. (strain PCC 7120 / SAG 25.82 / UTEX 2576) protein is tRNA pseudouridine synthase B.